We begin with the raw amino-acid sequence, 374 residues long: 4-hydroxy-3-methylbut-2-en-1-yl diphosphate synthase (flavodoxin) (374 aa).

[4Fe-4S] cluster contacts are provided by C272, C275, C307, and E314.

It belongs to the IspG family. The cofactor is [4Fe-4S] cluster.

It catalyses the reaction (2E)-4-hydroxy-3-methylbut-2-enyl diphosphate + oxidized [flavodoxin] + H2O + 2 H(+) = 2-C-methyl-D-erythritol 2,4-cyclic diphosphate + reduced [flavodoxin]. Its pathway is isoprenoid biosynthesis; isopentenyl diphosphate biosynthesis via DXP pathway; isopentenyl diphosphate from 1-deoxy-D-xylulose 5-phosphate: step 5/6. Converts 2C-methyl-D-erythritol 2,4-cyclodiphosphate (ME-2,4cPP) into 1-hydroxy-2-methyl-2-(E)-butenyl 4-diphosphate. In Acidiphilium cryptum (strain JF-5), this protein is 4-hydroxy-3-methylbut-2-en-1-yl diphosphate synthase (flavodoxin).